The following is a 150-amino-acid chain: UPF0260 protein CGSHiGG_00425 (150 aa).

It belongs to the UPF0260 family.

The chain is UPF0260 protein CGSHiGG_00425 from Haemophilus influenzae (strain PittGG).